A 111-amino-acid polypeptide reads, in one-letter code: Dynein light chain Tctex-type (111 aa).

The protein belongs to the dynein light chain Tctex-type family.

Its subcellular location is the cytoplasm. It is found in the cytoskeleton. In terms of biological role, acts as a non-catalytic accessory component of a dynein complex. The chain is Dynein light chain Tctex-type (dlcA) from Dictyostelium discoideum (Social amoeba).